We begin with the raw amino-acid sequence, 326 residues long: Altered inheritance of mitochondria protein 39, mitochondrial (326 aa).

The N-terminal 40 residues, M1–D40, are a transit peptide targeting the mitochondrion. Residues R47–E75 are disordered. Residues P48–D65 are compositionally biased toward polar residues. The chain crosses the membrane as a helical span at residues A93 to Y115.

It belongs to the AIM39 family.

The protein localises to the mitochondrion membrane. The polypeptide is Altered inheritance of mitochondria protein 39, mitochondrial (AIM39) (Zygosaccharomyces rouxii (strain ATCC 2623 / CBS 732 / NBRC 1130 / NCYC 568 / NRRL Y-229)).